The following is a 259-amino-acid chain: Dihydroorotate dehydrogenase B (NAD(+)), electron transfer subunit (259 aa).

The FAD-binding FR-type domain occupies 2–102 (MQKQNMIVVN…LGPLGHGFPV (101 aa)). Residues 53 to 56 (RPIS), 70 to 72 (LYR), and 77 to 78 (GT) contribute to the FAD site. Positions 221, 226, 229, and 246 each coordinate [2Fe-2S] cluster.

This sequence belongs to the PyrK family. In terms of assembly, heterotetramer of 2 PyrK and 2 PyrD type B subunits. The cofactor is [2Fe-2S] cluster. It depends on FAD as a cofactor.

It participates in pyrimidine metabolism; UMP biosynthesis via de novo pathway; orotate from (S)-dihydroorotate (NAD(+) route): step 1/1. Functionally, responsible for channeling the electrons from the oxidation of dihydroorotate from the FMN redox center in the PyrD type B subunit to the ultimate electron acceptor NAD(+). The chain is Dihydroorotate dehydrogenase B (NAD(+)), electron transfer subunit from Bacillus cereus (strain Q1).